Reading from the N-terminus, the 403-residue chain is Phosphopentomutase (403 aa).

Mn(2+) is bound by residues aspartate 13, aspartate 298, histidine 303, aspartate 339, histidine 340, and histidine 351.

Belongs to the phosphopentomutase family. It depends on Mn(2+) as a cofactor.

The protein localises to the cytoplasm. The enzyme catalyses 2-deoxy-alpha-D-ribose 1-phosphate = 2-deoxy-D-ribose 5-phosphate. It carries out the reaction alpha-D-ribose 1-phosphate = D-ribose 5-phosphate. Its pathway is carbohydrate degradation; 2-deoxy-D-ribose 1-phosphate degradation; D-glyceraldehyde 3-phosphate and acetaldehyde from 2-deoxy-alpha-D-ribose 1-phosphate: step 1/2. Isomerase that catalyzes the conversion of deoxy-ribose 1-phosphate (dRib-1-P) and ribose 1-phosphate (Rib-1-P) to deoxy-ribose 5-phosphate (dRib-5-P) and ribose 5-phosphate (Rib-5-P), respectively. This Streptococcus equi subsp. zooepidemicus (strain H70) protein is Phosphopentomutase.